A 728-amino-acid chain; its full sequence is Catalase-peroxidase (728 aa).

The segment at residues 91–218 is a cross-link (tryptophyl-tyrosyl-methioninium (Trp-Tyr) (with M-244)); the sequence is WHSAGTYRTA…LAAVQMGLIY (128 aa). Histidine 92 (proton acceptor) is an active-site residue. Positions 218–244 form a cross-link, tryptophyl-tyrosyl-methioninium (Tyr-Met) (with W-91); the sequence is YVNPEGPDGNPDPVAAARDIRDTFARM. Histidine 259 contacts heme b.

This sequence belongs to the peroxidase family. Peroxidase/catalase subfamily. Homodimer or homotetramer. The cofactor is heme b. In terms of processing, formation of the three residue Trp-Tyr-Met cross-link is important for the catalase, but not the peroxidase activity of the enzyme.

It catalyses the reaction H2O2 + AH2 = A + 2 H2O. The enzyme catalyses 2 H2O2 = O2 + 2 H2O. In terms of biological role, bifunctional enzyme with both catalase and broad-spectrum peroxidase activity. This chain is Catalase-peroxidase, found in Burkholderia mallei (strain NCTC 10247).